We begin with the raw amino-acid sequence, 149 residues long: 3-dehydroquinate dehydratase (149 aa).

Residue Tyr24 is the Proton acceptor of the active site. Residues Asn76, His82, and Asp89 each contribute to the substrate site. His102 (proton donor) is an active-site residue. Substrate contacts are provided by residues 103–104 and Arg113; that span reads LS.

Belongs to the type-II 3-dehydroquinase family. Homododecamer.

The enzyme catalyses 3-dehydroquinate = 3-dehydroshikimate + H2O. The protein operates within metabolic intermediate biosynthesis; chorismate biosynthesis; chorismate from D-erythrose 4-phosphate and phosphoenolpyruvate: step 3/7. Its function is as follows. Catalyzes a trans-dehydration via an enolate intermediate. This chain is 3-dehydroquinate dehydratase, found in Acinetobacter baylyi (strain ATCC 33305 / BD413 / ADP1).